The sequence spans 453 residues: tRNA modification GTPase MnmE (453 aa).

The (6S)-5-formyl-5,6,7,8-tetrahydrofolate site is built by Arg-22, Glu-79, and Lys-119. One can recognise a TrmE-type G domain in the interval 215-376 (GMKVVIAGRP…LKQHLKSLMG (162 aa)). Asn-225 lines the K(+) pocket. GTP is bound by residues 225 to 230 (NAGKSS), 244 to 250 (TEIAGTT), 269 to 272 (DTAG), and 334 to 337 (NKAD). Mg(2+) is bound at residue Ser-229. 3 residues coordinate K(+): Thr-244, Ile-246, and Thr-249. Residue Thr-250 coordinates Mg(2+). Lys-453 provides a ligand contact to (6S)-5-formyl-5,6,7,8-tetrahydrofolate.

It belongs to the TRAFAC class TrmE-Era-EngA-EngB-Septin-like GTPase superfamily. TrmE GTPase family. Homodimer. Heterotetramer of two MnmE and two MnmG subunits. It depends on K(+) as a cofactor.

The protein localises to the cytoplasm. Exhibits a very high intrinsic GTPase hydrolysis rate. Involved in the addition of a carboxymethylaminomethyl (cmnm) group at the wobble position (U34) of certain tRNAs, forming tRNA-cmnm(5)s(2)U34. This Shewanella baltica (strain OS155 / ATCC BAA-1091) protein is tRNA modification GTPase MnmE.